The chain runs to 590 residues: O-fucosyltransferase 2 (590 aa).

Positions 1–16 are enriched in basic and acidic residues; sequence MGQERPNDEERPESRD. Positions 1-26 are disordered; the sequence is MGQERPNDEERPESRDLGVYGCSPPH. A helical; Signal-anchor for type II membrane protein transmembrane segment spans residues 67-87; it reads TAIGVMAILGFFCLVNWFMLS. The N-linked (GlcNAc...) asparagine glycan is linked to N125. 365–367 is a substrate binding site; sequence HLR. Residues N485 and N546 are each glycosylated (N-linked (GlcNAc...) asparagine).

The protein belongs to the glycosyltransferase GT106 family.

The protein localises to the membrane. The protein operates within glycan metabolism. This chain is O-fucosyltransferase 2, found in Arabidopsis thaliana (Mouse-ear cress).